A 1153-amino-acid chain; its full sequence is Reverse gyrase 2 (1153 aa).

The RG N-terminal-type zinc finger occupies M1–I41. Zn(2+)-binding residues include C10, C13, C28, and C31. Residues Q86 and A103–T110 each bind ATP. The Helicase ATP-binding domain occupies L90–P276. The short motif at D184–D187 is the DEAD box element. Residues M567 to V1153 form a topoisomerase I region. In terms of domain architecture, Toprim spans T571–I735. E577 lines the Mg(2+) pocket. Residues L654–S681 form an RG C-terminal-type zinc finger. Residues C657, C660, C671, and C674 each contribute to the Zn(2+) site. A Mg(2+)-binding site is contributed by D704. Residues N751–K1142 enclose the Topo IA-type catalytic domain. Residue Y894 is the O-(5'-phospho-DNA)-tyrosine intermediate of the active site.

It in the N-terminal section; belongs to the DEAD box helicase family. DDVD subfamily. In the C-terminal section; belongs to the type IA topoisomerase family. In terms of assembly, monomer. The cofactor is Zn(2+). Mg(2+) is required as a cofactor.

The protein localises to the cytoplasm. The enzyme catalyses ATP + H2O = ADP + phosphate + H(+). In terms of biological role, modifies the topological state of DNA by introducing positive supercoils in an ATP-dependent process, increasing the linking number in steps of +1. Binds to single-stranded DNA, transiently cleaves and then rejoins the ends, introducing a positive supercoil in the process. The scissile phosphodiester is attacked by the catalytic tyrosine of the enzyme, resulting in the formation of a DNA-(5'-phosphotyrosyl)-enzyme intermediate. Probably involved in rewinding DNA strands in regions of the chromosome that have opened up to allow replication, transcription, DNA repair and/or for DNA protection. Its function is as follows. Might be a cell cycle protein. This is Reverse gyrase 2 from Sulfolobus acidocaldarius (strain ATCC 33909 / DSM 639 / JCM 8929 / NBRC 15157 / NCIMB 11770).